The primary structure comprises 636 residues: Plasma kallikrein (636 aa).

The N-terminal stretch at 1 to 19 (MIALRQAAYFICLFATVSC) is a signal peptide. Apple domains lie at 21–104 (CLTQ…LKRC), 111–194 (CHRS…LKAC), 201–284 (CRVD…LLTC), and 294–377 (CHSK…LRLC). Cystine bridges form between cysteine 21–cysteine 104, cysteine 47–cysteine 77, cysteine 51–cysteine 57, cysteine 111–cysteine 194, cysteine 137–cysteine 166, cysteine 141–cysteine 147, cysteine 201–cysteine 284, cysteine 227–cysteine 256, cysteine 231–cysteine 237, cysteine 294–cysteine 377, cysteine 320–cysteine 349, and cysteine 324–cysteine 330. N-linked (GlcNAc...) asparagine glycans are attached at residues asparagine 66 and asparagine 127. N-linked (GlcNAc...) asparagine glycosylation is found at asparagine 361 and asparagine 397. The region spanning 392–627 (IVGGTNASWG…YVDWILEKTQ (236 aa)) is the Peptidase S1 domain. A disulfide bond links cysteine 420 and cysteine 436. Histidine 435 serves as the catalytic Charge relay system. Residue asparagine 454 is glycosylated (N-linked (GlcNAc...) asparagine). Residue aspartate 484 is the Charge relay system of the active site. An N-linked (GlcNAc...) asparagine glycan is attached at asparagine 495. 3 cysteine pairs are disulfide-bonded: cysteine 518–cysteine 585, cysteine 549–cysteine 564, and cysteine 575–cysteine 603. Residue serine 579 is the Charge relay system of the active site.

This sequence belongs to the peptidase S1 family. Plasma kallikrein subfamily. In terms of assembly, forms a heterodimer with SERPINA5. The zymogen is activated by factor XIIa, which cleaves the molecule into a light chain, which contains the active site, and a heavy chain, which associates with HMW kininogen. These chains are linked by one or more disulfide bonds.

The protein resides in the secreted. It catalyses the reaction Cleaves selectively Arg-|-Xaa and Lys-|-Xaa bonds, including Lys-|-Arg and Arg-|-Ser bonds in (human) kininogen to release bradykinin.. Its activity is regulated as follows. Inhibited by SERPINA5. Its function is as follows. The enzyme cleaves Lys-Arg and Arg-Ser bonds. It activates, in a reciprocal reaction, factor XII after its binding to a negatively charged surface. It also releases bradykinin from HMW kininogen and may also play a role in the renin-angiotensin system by converting prorenin into renin. In Bos taurus (Bovine), this protein is Plasma kallikrein (KLKB1).